Here is a 211-residue protein sequence, read N- to C-terminus: Mitotic spindle assembly checkpoint protein MAD2B (211 aa).

Residues Q13–V203 enclose the HORMA domain.

Homooligomer. Interacts with rev1. Interacts with rev3l. Interacts with fzr1 (in complex with the anaphase promoting complex APC). May interact with cdc20.

The protein localises to the nucleus. The protein resides in the cytoplasm. Its subcellular location is the cytoskeleton. It is found in the spindle. Its function is as follows. Adapter protein able to interact with different proteins and involved in different biological processes. Mediates the interaction between the error-prone DNA polymerase zeta catalytic subunit rev3l and the inserter polymerase rev1, thereby mediating the second polymerase switching in translesion DNA synthesis. Translesion DNA synthesis releases the replication blockade of replicative polymerases, stalled in presence of DNA lesions. May also play a role in signal transduction in response to DNA damage. May regulate the activation of the anaphase promoting complex APC thereby regulating progression through the cell cycle. Through transcriptional regulation may play a role in epithelial-mesenchymal transdifferentiation. Inhibits the fzr1-APC complex activity during mitosis. Plays a role in progression of mitosis. The protein is Mitotic spindle assembly checkpoint protein MAD2B (mad2l2) of Xenopus laevis (African clawed frog).